The chain runs to 260 residues: Small ribosomal subunit protein uS2 (260 aa).

The protein belongs to the universal ribosomal protein uS2 family.

In Streptococcus gordonii (strain Challis / ATCC 35105 / BCRC 15272 / CH1 / DL1 / V288), this protein is Small ribosomal subunit protein uS2.